The chain runs to 214 residues: MTTLADLRTNYSRASLDAADVNPNPFVQFDVWFKEALDAQLPEPNTMTLATVDESGRPSARIVLIKGADERGFVFFTNYESRKGRELAHNPNAALLFYWIELERQVRVEGRIEKTSEEESDRYFASRPLGSRIGAWASEQSAVIESRALLEAREKEIGARFGENPPRPPHWGGYRLVPSSIEFWQGRPSRLHDRLLYTRDAASASGWKIARLAP.

Residues 8–11 (RTNY) and Lys66 contribute to the substrate site. FMN-binding positions include 61–66 (RIVLIK), 76–77 (FT), Arg82, Lys83, and Gln105. Tyr123, Arg127, and Ser131 together coordinate substrate. Residues 140 to 141 (QS) and Trp184 each bind FMN. 190 to 192 (RLH) provides a ligand contact to substrate. Arg194 is an FMN binding site.

It belongs to the pyridoxamine 5'-phosphate oxidase family. Homodimer. Requires FMN as cofactor.

It catalyses the reaction pyridoxamine 5'-phosphate + O2 + H2O = pyridoxal 5'-phosphate + H2O2 + NH4(+). The enzyme catalyses pyridoxine 5'-phosphate + O2 = pyridoxal 5'-phosphate + H2O2. It participates in cofactor metabolism; pyridoxal 5'-phosphate salvage; pyridoxal 5'-phosphate from pyridoxamine 5'-phosphate: step 1/1. The protein operates within cofactor metabolism; pyridoxal 5'-phosphate salvage; pyridoxal 5'-phosphate from pyridoxine 5'-phosphate: step 1/1. Catalyzes the oxidation of either pyridoxine 5'-phosphate (PNP) or pyridoxamine 5'-phosphate (PMP) into pyridoxal 5'-phosphate (PLP). In Burkholderia pseudomallei (strain 1106a), this protein is Pyridoxine/pyridoxamine 5'-phosphate oxidase.